Here is a 551-residue protein sequence, read N- to C-terminus: Electron transfer flavoprotein-ubiquinone oxidoreductase (551 aa).

Position 10–24 (10–24 (VVIVGAGPAGLSAAC)) interacts with FAD. Residues cysteine 496, cysteine 520, cysteine 523, and cysteine 526 each coordinate [4Fe-4S] cluster. Positions 511–540 (KRFQINAQNCVHCKTCDIKDPAQNITWVAP) constitute a 4Fe-4S ferredoxin-type domain.

This sequence belongs to the ETF-QO/FixC family. The cofactor is [4Fe-4S] cluster. FAD is required as a cofactor.

It carries out the reaction a ubiquinone + reduced [electron-transfer flavoprotein] = a ubiquinol + oxidized [electron-transfer flavoprotein] + H(+). Functionally, accepts electrons from ETF and reduces ubiquinone. The polypeptide is Electron transfer flavoprotein-ubiquinone oxidoreductase (Pseudomonas aeruginosa (strain ATCC 15692 / DSM 22644 / CIP 104116 / JCM 14847 / LMG 12228 / 1C / PRS 101 / PAO1)).